The chain runs to 156 residues: Succinate dehydrogenase assembly factor 2-B, mitochondrial (156 aa).

A mitochondrion-targeting transit peptide spans 1–24; it reads MLRQFIISTVGRRQPLLMILQSRL.

The protein belongs to the SDHAF2 family. As to quaternary structure, interacts with the flavoprotein subunit within the SDH catalytic dimer.

The protein localises to the mitochondrion matrix. Functionally, plays an essential role in the assembly of succinate dehydrogenase (SDH), an enzyme complex (also referred to as respiratory complex II) that is a component of both the tricarboxylic acid (TCA) cycle and the mitochondrial electron transport chain, and which couples the oxidation of succinate to fumarate with the reduction of ubiquinone (coenzyme Q) to ubiquinol. Required for flavinylation (covalent attachment of FAD) of the flavoprotein subunit of the SDH catalytic dimer. The protein is Succinate dehydrogenase assembly factor 2-B, mitochondrial of Drosophila yakuba (Fruit fly).